We begin with the raw amino-acid sequence, 233 residues long: Snake venom serine protease ussurase (233 aa).

One can recognise a Peptidase S1 domain in the interval 1-224 (VIGGVECNIN…YTDWIQSIIS (224 aa)). Intrachain disulfides connect C7–C138, C25–C41, C73–C231, C117–C185, C149–C164, and C175–C200. H40 functions as the Charge relay system in the catalytic mechanism. N-linked (GlcNAc...) asparagine glycosylation is present at N54. D85 (charge relay system) is an active-site residue. The active-site Charge relay system is the S179.

It belongs to the peptidase S1 family. Snake venom subfamily. In terms of assembly, monomer. As to expression, expressed by the venom gland.

It localises to the secreted. Its function is as follows. Snake venom serine protease that may act in the hemostasis system of the prey. This is Snake venom serine protease ussurase from Gloydius ussuriensis (Ussuri mamushi).